Consider the following 88-residue polypeptide: NADH-ubiquinone oxidoreductase chain 4L (88 aa).

2 helical membrane-spanning segments follow: residues 22 to 42 (IILMIISIEIMLLAVTLLVLV) and 57 to 77 (IYIIAIAGAESAIGLGILVAY).

This sequence belongs to the complex I subunit 4L family.

It is found in the mitochondrion membrane. The enzyme catalyses a ubiquinone + NADH + 5 H(+)(in) = a ubiquinol + NAD(+) + 4 H(+)(out). Functionally, core subunit of the mitochondrial membrane respiratory chain NADH dehydrogenase (Complex I) that is believed to belong to the minimal assembly required for catalysis. Complex I functions in the transfer of electrons from NADH to the respiratory chain. The immediate electron acceptor for the enzyme is believed to be ubiquinone. The protein is NADH-ubiquinone oxidoreductase chain 4L (ND4L) of Trimorphomyces papilionaceus (Jelly fungus).